The primary structure comprises 432 residues: Adenosylhomocysteinase (432 aa).

The segment at 1-24 (MSAYSPLSAQLDADTDVDVESTRT) is disordered. Residues Asp-137 and Glu-162 each coordinate substrate. Residue 163–165 (TTT) participates in NAD(+) binding. Substrate is bound by residues Lys-192 and Asp-196. Residues Asn-197, 226-231 (GYGYCG), Glu-249, Asn-284, 305-307 (AGH), and Asn-352 each bind NAD(+).

This sequence belongs to the adenosylhomocysteinase family. The cofactor is NAD(+).

The protein localises to the cytoplasm. The enzyme catalyses S-adenosyl-L-homocysteine + H2O = L-homocysteine + adenosine. It functions in the pathway amino-acid biosynthesis; L-homocysteine biosynthesis; L-homocysteine from S-adenosyl-L-homocysteine: step 1/1. Functionally, may play a key role in the regulation of the intracellular concentration of adenosylhomocysteine. The polypeptide is Adenosylhomocysteinase (Haloquadratum walsbyi (strain DSM 16854 / JCM 12705 / C23)).